The following is a 201-amino-acid chain: Holliday junction branch migration complex subunit RuvA (201 aa).

The tract at residues 1 to 64 (MYEYIKGKYI…QDFIGLYGFL (64 aa)) is domain I. Residues 65–143 (TKDELEMFNK…STDISKGNSE (79 aa)) are domain II. Positions 144–154 (INNLDVDYDEH) are flexible linker. A domain III region spans residues 154–201 (HSKKLEEVRFALNSLGYSEKETDRAINNVDKSEGIENIIKSCLRFLMN).

The protein belongs to the RuvA family. As to quaternary structure, homotetramer. Forms an RuvA(8)-RuvB(12)-Holliday junction (HJ) complex. HJ DNA is sandwiched between 2 RuvA tetramers; dsDNA enters through RuvA and exits via RuvB. An RuvB hexamer assembles on each DNA strand where it exits the tetramer. Each RuvB hexamer is contacted by two RuvA subunits (via domain III) on 2 adjacent RuvB subunits; this complex drives branch migration. In the full resolvosome a probable DNA-RuvA(4)-RuvB(12)-RuvC(2) complex forms which resolves the HJ.

It is found in the cytoplasm. In terms of biological role, the RuvA-RuvB-RuvC complex processes Holliday junction (HJ) DNA during genetic recombination and DNA repair, while the RuvA-RuvB complex plays an important role in the rescue of blocked DNA replication forks via replication fork reversal (RFR). RuvA specifically binds to HJ cruciform DNA, conferring on it an open structure. The RuvB hexamer acts as an ATP-dependent pump, pulling dsDNA into and through the RuvAB complex. HJ branch migration allows RuvC to scan DNA until it finds its consensus sequence, where it cleaves and resolves the cruciform DNA. In Clostridium acetobutylicum (strain ATCC 824 / DSM 792 / JCM 1419 / IAM 19013 / LMG 5710 / NBRC 13948 / NRRL B-527 / VKM B-1787 / 2291 / W), this protein is Holliday junction branch migration complex subunit RuvA.